Here is a 275-residue protein sequence, read N- to C-terminus: NAD kinase (275 aa).

The Proton acceptor role is filled by D66. NAD(+) is bound by residues 66 to 67 (DG), 138 to 139 (NE), H168, D170, 181 to 186 (TAYNLS), and V205.

This sequence belongs to the NAD kinase family. A divalent metal cation serves as cofactor.

It localises to the cytoplasm. The enzyme catalyses NAD(+) + ATP = ADP + NADP(+) + H(+). In terms of biological role, involved in the regulation of the intracellular balance of NAD and NADP, and is a key enzyme in the biosynthesis of NADP. Catalyzes specifically the phosphorylation on 2'-hydroxyl of the adenosine moiety of NAD to yield NADP. The sequence is that of NAD kinase from Halorubrum lacusprofundi (strain ATCC 49239 / DSM 5036 / JCM 8891 / ACAM 34).